A 287-amino-acid chain; its full sequence is Oxaloacetate decarboxylase (287 aa).

A substrate-binding site is contributed by Ser50. Asp88 contacts Mg(2+). Residues Arg159 and His235 each contribute to the substrate site.

Belongs to the isocitrate lyase family. Oxaloacetate decarboxylase subfamily. In terms of assembly, homotetramer; dimer of dimers. Requires Mg(2+) as cofactor.

The enzyme catalyses oxaloacetate + H(+) = pyruvate + CO2. In terms of biological role, catalyzes the decarboxylation of oxaloacetate into pyruvate. Seems to play a role in maintaining cellular concentrations of bicarbonate and pyruvate. This is Oxaloacetate decarboxylase from Pseudomonas aeruginosa (strain LESB58).